Here is a 338-residue protein sequence, read N- to C-terminus: MAAVQAPGEKINIQAGETTQVGDTDQQRNDWPEEDRLPERSWRQKCASYVLALRPWSFSASLTPVALGSALAYRSQGVLDPRLLLGCAVAVLAVHGAGNLVNTYYDFSKGIDHKKSDDRTLVDRILEPQDVVRFGVFLYTLGCVCAAYLYYLSTLKLEHLALIYFGGLSGSFLYTGGIGFKYVALGDLVILITFGPLAVMFAYAVQVGSLAIFPLVYAIPLALSTEAILHSNNTRDMESDREAGIVTLAILIGPTLSYILYNTLLFLPYLIFTILATHCSISLALPLLTSPMAFSLERQFRSQAFNKLPQRTAKLNLLLGLFYVFGIILAPAGSLPRL.

Residues 1 to 39 are disordered; it reads MAAVQAPGEKINIQAGETTQVGDTDQQRNDWPEEDRLPE. Residue Ala-2 is modified to N-acetylalanine. A compositionally biased stretch (polar residues) spans 15–24; sequence AGETTQVGDT. Over residues 25 to 39 the composition is skewed to basic and acidic residues; it reads DQQRNDWPEEDRLPE. 8 consecutive transmembrane segments (helical) span residues 83–103, 134–154, 160–180, 188–208, 209–229, 245–267, 277–297, and 315–335; these read LLLG…LVNT, FGVF…YLST, LALI…GIGF, LVIL…VQVG, SLAI…EAIL, IVTL…LLFL, THCS…FSLE, and LNLL…AGSL.

It belongs to the UbiA prenyltransferase family. Interacts with HMGCR and SOAT1.

It localises to the endoplasmic reticulum membrane. It is found in the golgi apparatus membrane. Its subcellular location is the mitochondrion membrane. It carries out the reaction menadiol + (2E,6E,10E)-geranylgeranyl diphosphate = menaquinol-4 + diphosphate. It catalyses the reaction all-trans-decaprenyl diphosphate + 4-hydroxybenzoate = 4-hydroxy-3-(all-trans-decaprenyl)benzoate + diphosphate. It functions in the pathway quinol/quinone metabolism; menaquinone biosynthesis. Its pathway is cofactor biosynthesis; ubiquinone biosynthesis. Prenyltransferase that mediates the formation of menaquinone-4 (MK-4) and coenzyme Q10. MK-4 is a vitamin K2 isoform required for endothelial cell development. Mediates the conversion of phylloquinone (PK) into MK-4, probably by cleaving the side chain of phylloquinone (PK) to release 2-methyl-1,4-naphthoquinone (menadione; K3) and then prenylating it with geranylgeranyl pyrophosphate (GGPP) to form MK-4. Also plays a role in cardiovascular development independently of MK-4 biosynthesis, by acting as a coenzyme Q10 biosynthetic enzyme: coenzyme Q10, also named ubiquinone, plays an important antioxidant role in the cardiovascular system. Mediates biosynthesis of coenzyme Q10 in the Golgi membrane, leading to protect cardiovascular tissues from NOS3/eNOS-dependent oxidative stress. This is UbiA prenyltransferase domain-containing protein 1 (Ubiad1) from Rattus norvegicus (Rat).